The following is a 142-amino-acid chain: ATP synthase epsilon chain (142 aa).

This sequence belongs to the ATPase epsilon chain family. In terms of assembly, F-type ATPases have 2 components, CF(1) - the catalytic core - and CF(0) - the membrane proton channel. CF(1) has five subunits: alpha(3), beta(3), gamma(1), delta(1), epsilon(1). CF(0) has three main subunits: a, b and c.

It is found in the cell inner membrane. In terms of biological role, produces ATP from ADP in the presence of a proton gradient across the membrane. This is ATP synthase epsilon chain from Histophilus somni (strain 2336) (Haemophilus somnus).